The chain runs to 452 residues: Bifunctional protein GlmU (452 aa).

The interval 1-226 (MSLDIVILAA…AMEVQGANDR (226 aa)) is pyrophosphorylase. UDP-N-acetyl-alpha-D-glucosamine contacts are provided by residues 8-11 (LAAG), K22, Q73, 78-79 (GT), 99-101 (YGD), G136, E151, N166, and N224. A Mg(2+)-binding site is contributed by D101. Mg(2+) is bound at residue N224. The segment at 227-247 (IQLAELERHYQLRAARRLMAQ) is linker. An N-acetyltransferase region spans residues 248-452 (GVTLRDPARF…IDGWQRPTKK (205 aa)). UDP-N-acetyl-alpha-D-glucosamine contacts are provided by R330 and K348. H360 acts as the Proton acceptor in catalysis. UDP-N-acetyl-alpha-D-glucosamine-binding residues include Y363 and N374. Acetyl-CoA contacts are provided by residues A377, 383–384 (NY), S402, A420, and R437.

In the N-terminal section; belongs to the N-acetylglucosamine-1-phosphate uridyltransferase family. This sequence in the C-terminal section; belongs to the transferase hexapeptide repeat family. As to quaternary structure, homotrimer. Requires Mg(2+) as cofactor.

It is found in the cytoplasm. It carries out the reaction alpha-D-glucosamine 1-phosphate + acetyl-CoA = N-acetyl-alpha-D-glucosamine 1-phosphate + CoA + H(+). The enzyme catalyses N-acetyl-alpha-D-glucosamine 1-phosphate + UTP + H(+) = UDP-N-acetyl-alpha-D-glucosamine + diphosphate. Its pathway is nucleotide-sugar biosynthesis; UDP-N-acetyl-alpha-D-glucosamine biosynthesis; N-acetyl-alpha-D-glucosamine 1-phosphate from alpha-D-glucosamine 6-phosphate (route II): step 2/2. The protein operates within nucleotide-sugar biosynthesis; UDP-N-acetyl-alpha-D-glucosamine biosynthesis; UDP-N-acetyl-alpha-D-glucosamine from N-acetyl-alpha-D-glucosamine 1-phosphate: step 1/1. It participates in bacterial outer membrane biogenesis; LPS lipid A biosynthesis. Functionally, catalyzes the last two sequential reactions in the de novo biosynthetic pathway for UDP-N-acetylglucosamine (UDP-GlcNAc). The C-terminal domain catalyzes the transfer of acetyl group from acetyl coenzyme A to glucosamine-1-phosphate (GlcN-1-P) to produce N-acetylglucosamine-1-phosphate (GlcNAc-1-P), which is converted into UDP-GlcNAc by the transfer of uridine 5-monophosphate (from uridine 5-triphosphate), a reaction catalyzed by the N-terminal domain. In Stutzerimonas stutzeri (strain A1501) (Pseudomonas stutzeri), this protein is Bifunctional protein GlmU.